The chain runs to 345 residues: NADH-quinone oxidoreductase subunit H (345 aa).

The next 8 helical transmembrane spans lie at 13 to 33 (VIILAQTLAVVAFVMISLLFL), 84 to 104 (FILAPLTSFVLAMIAWAVIPF), 115 to 135 (VAILYVFAVSSLEVYGVIMGG), 161 to 181 (IGLIIIGVILSTGSMNFGDIV), 190 to 210 (LFNWYWLPHFPMVFLFFISCL), 248 to 268 (YIAIFLMCALTSLLFFGGWLS), 277 to 297 (PLWMVAKMAFFFFLFAMVKAI), and 309 to 329 (LGWKVFLPFSLIWVVFVAFAA).

The protein belongs to the complex I subunit 1 family. NDH-1 is composed of 14 different subunits. Subunits NuoA, H, J, K, L, M, N constitute the membrane sector of the complex.

It is found in the cell inner membrane. It catalyses the reaction a quinone + NADH + 5 H(+)(in) = a quinol + NAD(+) + 4 H(+)(out). Its function is as follows. NDH-1 shuttles electrons from NADH, via FMN and iron-sulfur (Fe-S) centers, to quinones in the respiratory chain. The immediate electron acceptor for the enzyme in this species is believed to be ubiquinone. Couples the redox reaction to proton translocation (for every two electrons transferred, four hydrogen ions are translocated across the cytoplasmic membrane), and thus conserves the redox energy in a proton gradient. This subunit may bind ubiquinone. The chain is NADH-quinone oxidoreductase subunit H from Ruegeria sp. (strain TM1040) (Silicibacter sp.).